The chain runs to 780 residues: LPS-assembly protein LptD (780 aa).

Residues 1–24 form the signal peptide; it reads MKKRFPTLLATLIWTALYSQHTLA.

Belongs to the LptD family. As to quaternary structure, component of the lipopolysaccharide transport and assembly complex. Interacts with LptE and LptA.

It is found in the cell outer membrane. Its function is as follows. Together with LptE, is involved in the assembly of lipopolysaccharide (LPS) at the surface of the outer membrane. The sequence is that of LPS-assembly protein LptD from Yersinia pseudotuberculosis serotype I (strain IP32953).